Here is a 209-residue protein sequence, read N- to C-terminus: Ribosomal RNA large subunit methyltransferase E (209 aa).

5 residues coordinate S-adenosyl-L-methionine: Gly-63, Trp-65, Asp-83, Asp-99, and Asp-124. The active-site Proton acceptor is Lys-164.

The protein belongs to the class I-like SAM-binding methyltransferase superfamily. RNA methyltransferase RlmE family.

The protein resides in the cytoplasm. The enzyme catalyses uridine(2552) in 23S rRNA + S-adenosyl-L-methionine = 2'-O-methyluridine(2552) in 23S rRNA + S-adenosyl-L-homocysteine + H(+). Specifically methylates the uridine in position 2552 of 23S rRNA at the 2'-O position of the ribose in the fully assembled 50S ribosomal subunit. This is Ribosomal RNA large subunit methyltransferase E from Vibrio vulnificus (strain CMCP6).